The chain runs to 3330 residues: Laminin subunit alpha-3 (3330 aa).

The signal sequence occupies residues 1-31 (MAVALGRAPRSLPLLLTLLLLLLLRMSPSWS). The region spanning 40-295 (SSRSLHPPYF…SIKDISVGGR (256 aa)) is the Laminin N-terminal domain. N-linked (GlcNAc...) asparagine glycosylation is present at Asn-139. Positions 295–725 (RCVCNGHAEA…NNYYFPDLHH (431 aa)) are domain V. 27 cysteine pairs are disulfide-bonded: Cys-296–Cys-305, Cys-298–Cys-316, Cys-318–Cys-327, Cys-330–Cys-350, Cys-353–Cys-362, Cys-355–Cys-387, Cys-390–Cys-399, Cys-402–Cys-420, Cys-423–Cys-433, Cys-425–Cys-440, Cys-442–Cys-451, Cys-454–Cys-464, Cys-488–Cys-500, Cys-490–Cys-506, Cys-508–Cys-517, Cys-520–Cys-530, Cys-533–Cys-545, Cys-535–Cys-552, Cys-554–Cys-563, Cys-566–Cys-583, Cys-628–Cys-642, Cys-630–Cys-649, Cys-651–Cys-660, Cys-663–Cys-678, Cys-681–Cys-693, Cys-683–Cys-700, and Cys-702–Cys-711. 8 Laminin EGF-like domains span residues 296-350 (CVCN…HNEC), 353-420 (CNCH…LHGC), 423-464 (CSCD…FPFC), 488-530 (CDCN…FPIC), 533-576 (CQCS…FPYC), 582-625 (VCHP…PRGC), 628-678 (CQCH…YFGC), and 681-725 (CQCD…DLHH). Residue Asn-445 is glycosylated (N-linked (GlcNAc...) asparagine). The tract at residues 793–1262 (TEAISGRITL…VAFYHNGAIP (470 aa)) is domain IV 1 (domain IV B). Residues 1263–1462 (CECDPAGTAG…CFCFGVNTDC (200 aa)) are domain III B. Cystine bridges form between Cys-1309-Cys-1316, Cys-1311-Cys-1323, Cys-1325-Cys-1334, Cys-1337-Cys-1350, Cys-1353-Cys-1368, Cys-1355-Cys-1375, Cys-1377-Cys-1386, Cys-1389-Cys-1399, Cys-1402-Cys-1414, Cys-1404-Cys-1421, Cys-1423-Cys-1432, and Cys-1435-Cys-1450. Laminin EGF-like domains are found at residues 1309–1352 (CNCG…GCDV), 1353–1401 (CNCS…ECVP), and 1402–1452 (CSCN…GCTK). The N-linked (GlcNAc...) asparagine glycan is linked to Asn-1354. Positions 1453–1462 (CFCFGVNTDC) constitute a Laminin EGF-like 12; first part domain. In terms of domain architecture, Laminin IV type A spans 1466-1650 (HKQRAKFVDM…SGPRAHLVEM (185 aa)). A Laminin EGF-like 12; second part domain is found at 1651 to 1683 (CACPPDYTGDSCQGCRPGYYWDNKSLPVGRCVP). Positions 1651–1818 (CACPPDYTGD…DGSPAEECDD (168 aa)) are domain III A. Asn-1673 carries an N-linked (GlcNAc...) asparagine glycan. Intrachain disulfides connect Cys-1684-Cys-1693, Cys-1686-Cys-1700, Cys-1703-Cys-1712, Cys-1715-Cys-1728, Cys-1731-Cys-1743, Cys-1733-Cys-1752, Cys-1754-Cys-1763, and Cys-1766-Cys-1781. 2 consecutive Laminin EGF-like domains span residues 1684–1730 (CNCN…SCRV) and 1731–1783 (CPCP…SCQP). Residues 1784–1818 (CNCNSNGQLGPCDPLTGDCVNQEPKDGSPAEECDD) form the Laminin EGF-like 15; truncated domain. The interval 1819–2385 (CDSCVMTLLN…ARDAANKVAI (567 aa)) is domain II and I. 4 coiled-coil regions span residues 1851–1980 (TGAL…LRSR), 2012–2057 (VENN…HENE), 2088–2165 (LLQT…GDEL), and 2211–2238 (KRAKTLSSDSEELLNEAKMTQKRLQQVS). The N-linked (GlcNAc...) asparagine glycan is linked to Asn-2159. Asn-2261 is a glycosylation site (N-linked (GlcNAc...) asparagine). Positions 2274-2276 (RGD) match the Cell attachment site motif. Positions 2318–2383 (SARREDFSKA…QQARDAANKV (66 aa)) form a coiled coil. N-linked (GlcNAc...) asparagine glycosylation is found at Asn-2332, Asn-2361, Asn-2498, Asn-2580, and Asn-2747. Laminin G-like domains lie at 2386–2587 (PMRF…VEPC), 2594–2756 (SDKN…TKKC), 2763–2923 (VRTA…LGGC), 2983–3147 (ALQF…VSPC), and 3154–3327 (KGIY…LNGC). Cystine bridges form between Cys-2557/Cys-2587, Cys-2733/Cys-2756, and Cys-2891/Cys-2923. Residue Asn-3094 is glycosylated (N-linked (GlcNAc...) asparagine). A disulfide bridge connects residues Cys-3124 and Cys-3147. A glycan (N-linked (GlcNAc...) asparagine) is linked at Asn-3270. Cys-3299 and Cys-3327 are oxidised to a cystine.

Laminin is a complex glycoprotein, consisting of three different polypeptide chains (alpha, beta, gamma), which are bound to each other by disulfide bonds into a cross-shaped molecule comprising one long and three short arms with globules at each end. Alpha-3 is a subunit of laminin-5 (laminin-332 or epiligrin/kalinin/nicein), laminin-6 (laminin-311 or K-laminin) and laminin-7 (laminin-321 or KS-laminin). Basal membrane of the upper alimentary tract and urinary and nasal epithelia, salivary glands and teeth (both variants). Isoform A is predominantly expressed in skin, hair follicles and developing neurons of the trigeminal ganglion. Isoform B was found in bronchi, alveoli, stomach, intestinal crypts, whisker pads, CNS, telencephalic neuroectoderm, thalamus, Rathke pouch and periventricular subependymal germinal layer.

The protein resides in the secreted. Its subcellular location is the extracellular space. It localises to the extracellular matrix. It is found in the basement membrane. Binding to cells via a high affinity receptor, laminin is thought to mediate the attachment, migration and organization of cells into tissues during embryonic development by interacting with other extracellular matrix components. In terms of biological role, laminin-5 is thought to be involved in (1) cell adhesion via integrin alpha-3/beta-1 in focal adhesion and integrin alpha-6/beta-4 in hemidesmosomes, (2) signal transduction via tyrosine phosphorylation of pp125-FAK and p80, (3) differentiation of keratinocytes. This is Laminin subunit alpha-3 (Lama3) from Mus musculus (Mouse).